Here is a 188-residue protein sequence, read N- to C-terminus: Elongation factor P (188 aa).

Belongs to the elongation factor P family.

The protein localises to the cytoplasm. It participates in protein biosynthesis; polypeptide chain elongation. Its function is as follows. Involved in peptide bond synthesis. Stimulates efficient translation and peptide-bond synthesis on native or reconstituted 70S ribosomes in vitro. Probably functions indirectly by altering the affinity of the ribosome for aminoacyl-tRNA, thus increasing their reactivity as acceptors for peptidyl transferase. The chain is Elongation factor P from Rhodopseudomonas palustris (strain BisA53).